A 244-amino-acid chain; its full sequence is Mast cell protease 2 (244 aa).

A signal peptide spans 1–18; that stretch reads MQALLFLMALLLPSGAGA. The propeptide at 19–20 is activation peptide; the sequence is EE. Residues 21-242 form the Peptidase S1 domain; sequence IIGGVEAKPH…YLPWIYKVLK (222 aa). N-linked (GlcNAc...) asparagine glycosylation occurs at asparagine 44. An intrachain disulfide couples cysteine 50 to cysteine 66. Catalysis depends on charge relay system residues histidine 65 and aspartate 109. 2 disulfide bridges follow: cysteine 143–cysteine 208 and cysteine 174–cysteine 187. The active-site Charge relay system is serine 202.

This sequence belongs to the peptidase S1 family. Granzyme subfamily. As to expression, mucosal mast cells.

This Mus musculus (Mouse) protein is Mast cell protease 2 (Mcpt2).